A 259-amino-acid chain; its full sequence is 14-3-3-like protein (259 aa).

Residues 237-259 (DTTDDAEDEIREGSKQESGDGQQ) form a disordered region. Positions 247-259 (REGSKQESGDGQQ) are enriched in basic and acidic residues.

Belongs to the 14-3-3 family. Leaves specific.

The sequence is that of 14-3-3-like protein from Solanum tuberosum (Potato).